The sequence spans 144 residues: MNKFIKKINFIKNFSSCENWEEKYLYIIELGNKLSPFPEKFRKNSNLIPGCQNDSWIYLIYENTKKIKFYGDSNSLIVKGLIAIIFILHEDLKLSEILTFDVKPYFNKLSLTNYLTPSRVQGLSSISKFIKKSARCLLIKEKIL.

Residue cysteine 51 is the Cysteine persulfide intermediate of the active site.

Belongs to the SufE family. In terms of assembly, homodimer. Interacts with SufS.

The protein resides in the cytoplasm. It functions in the pathway cofactor biosynthesis; iron-sulfur cluster biosynthesis. In terms of biological role, participates in cysteine desulfuration mediated by SufS. Cysteine desulfuration mobilizes sulfur from L-cysteine to yield L-alanine and constitutes an essential step in sulfur metabolism for biosynthesis of a variety of sulfur-containing biomolecules. Functions as a sulfur acceptor for SufS, by mediating the direct transfer of the sulfur atom from the S-sulfanylcysteine of SufS, an intermediate product of cysteine desulfuration process. This chain is Cysteine desulfuration protein SufE, found in Wigglesworthia glossinidia brevipalpis.